Here is a 469-residue protein sequence, read N- to C-terminus: Glutamate--tRNA ligase (469 aa).

The 'HIGH' region motif lies at 9-19 (PSPTGYLHVGG). Zn(2+) contacts are provided by cysteine 98, cysteine 100, cysteine 125, and aspartate 127. Residues 237-241 (KLSKR) carry the 'KMSKS' region motif. Lysine 240 is an ATP binding site.

The protein belongs to the class-I aminoacyl-tRNA synthetase family. Glutamate--tRNA ligase type 1 subfamily. In terms of assembly, monomer. Zn(2+) serves as cofactor.

The protein localises to the cytoplasm. It catalyses the reaction tRNA(Glu) + L-glutamate + ATP = L-glutamyl-tRNA(Glu) + AMP + diphosphate. Functionally, catalyzes the attachment of glutamate to tRNA(Glu) in a two-step reaction: glutamate is first activated by ATP to form Glu-AMP and then transferred to the acceptor end of tRNA(Glu). This is Glutamate--tRNA ligase from Erwinia tasmaniensis (strain DSM 17950 / CFBP 7177 / CIP 109463 / NCPPB 4357 / Et1/99).